We begin with the raw amino-acid sequence, 245 residues long: uncharacterized protein (245 aa).

In terms of domain architecture, HTH gntR-type spans 29–96 (RSLIEATFQR…AQRGFHVTPM (68 aa)). The H-T-H motif DNA-binding region spans 56 to 75 (IEDLKSRYEVSGGTVREALS).

This is an uncharacterized protein from Paraburkholderia xenovorans (strain LB400).